We begin with the raw amino-acid sequence, 479 residues long: Aspartyl/glutamyl-tRNA(Asn/Gln) amidotransferase subunit B (479 aa).

Belongs to the GatB/GatE family. GatB subfamily. As to quaternary structure, heterotrimer of A, B and C subunits.

It carries out the reaction L-glutamyl-tRNA(Gln) + L-glutamine + ATP + H2O = L-glutaminyl-tRNA(Gln) + L-glutamate + ADP + phosphate + H(+). It catalyses the reaction L-aspartyl-tRNA(Asn) + L-glutamine + ATP + H2O = L-asparaginyl-tRNA(Asn) + L-glutamate + ADP + phosphate + 2 H(+). In terms of biological role, allows the formation of correctly charged Asn-tRNA(Asn) or Gln-tRNA(Gln) through the transamidation of misacylated Asp-tRNA(Asn) or Glu-tRNA(Gln) in organisms which lack either or both of asparaginyl-tRNA or glutaminyl-tRNA synthetases. The reaction takes place in the presence of glutamine and ATP through an activated phospho-Asp-tRNA(Asn) or phospho-Glu-tRNA(Gln). The polypeptide is Aspartyl/glutamyl-tRNA(Asn/Gln) amidotransferase subunit B (Halorhodospira halophila (strain DSM 244 / SL1) (Ectothiorhodospira halophila (strain DSM 244 / SL1))).